The sequence spans 185 residues: ATP synthase subunit b, chloroplastic (185 aa).

The chain crosses the membrane as a helical span at residues 27–49 (LATNPINLSVVLGVLVFFGKGVL).

Belongs to the ATPase B chain family. As to quaternary structure, F-type ATPases have 2 components, F(1) - the catalytic core - and F(0) - the membrane proton channel. F(1) has five subunits: alpha(3), beta(3), gamma(1), delta(1), epsilon(1). F(0) has four main subunits: a(1), b(1), b'(1) and c(10-14). The alpha and beta chains form an alternating ring which encloses part of the gamma chain. F(1) is attached to F(0) by a central stalk formed by the gamma and epsilon chains, while a peripheral stalk is formed by the delta, b and b' chains.

It is found in the plastid. It localises to the chloroplast thylakoid membrane. Its function is as follows. F(1)F(0) ATP synthase produces ATP from ADP in the presence of a proton or sodium gradient. F-type ATPases consist of two structural domains, F(1) containing the extramembraneous catalytic core and F(0) containing the membrane proton channel, linked together by a central stalk and a peripheral stalk. During catalysis, ATP synthesis in the catalytic domain of F(1) is coupled via a rotary mechanism of the central stalk subunits to proton translocation. Component of the F(0) channel, it forms part of the peripheral stalk, linking F(1) to F(0). This chain is ATP synthase subunit b, chloroplastic, found in Glycine max (Soybean).